Consider the following 102-residue polypeptide: Membrane-bound protein LytA (102 aa).

The N-terminal stretch at 1–16 is a signal peptide; that stretch reads MKKFIALLFFILLLSG. Residue Cys-17 is the site of N-palmitoyl cysteine attachment. Cys-17 carries S-diacylglycerol cysteine lipidation.

Its subcellular location is the cell membrane. Possible role in the secretion of LytB and LytC. This Bacillus subtilis (strain 168) protein is Membrane-bound protein LytA (lytA).